Reading from the N-terminus, the 155-residue chain is Transcriptional repressor NrdR (155 aa).

The segment at 3-34 (CPFCGNVDTQVKDSRPAEDHVSIRRRRFCPAC) is a zinc-finger region. In terms of domain architecture, ATP-cone spans 49 to 139 (LVVIKTNGKR…VYKNFQAADD (91 aa)).

It belongs to the NrdR family. Requires Zn(2+) as cofactor.

Its function is as follows. Negatively regulates transcription of bacterial ribonucleotide reductase nrd genes and operons by binding to NrdR-boxes. This Ruegeria sp. (strain TM1040) (Silicibacter sp.) protein is Transcriptional repressor NrdR.